Here is a 301-residue protein sequence, read N- to C-terminus: uncharacterized protein (301 aa).

Residues 1–25 (MKFKNTLSIFKILIILFSFYNVAFS) form the signal peptide. The Extracellular portion of the chain corresponds to 26 to 279 (DDTEKYTFKG…STTGSKDSST (254 aa)). The tract at residues 174 to 281 (LYTGSSNTPN…TGSKDSSTGN (108 aa)) is disordered. Asn191, Asn212, Asn234, and Asn241 each carry an N-linked (GlcNAc...) asparagine glycan. The span at 204–234 (SSSDSTNSNSSSTDTASSSPSSSPSSSPSPN) shows a compositional bias: low complexity. Low complexity predominate over residues 254–281 (GGVETSTAGSSTGTTSSTTGSKDSSTGN). The helical transmembrane segment at 280–300 (GNSILPTLIIVTFFVLTLVIM) threads the bilayer. Position 301 (Ser301) is a topological domain, cytoplasmic.

Its subcellular location is the membrane. This is an uncharacterized protein from Dictyostelium discoideum (Social amoeba).